Here is a 333-residue protein sequence, read N- to C-terminus: Cysteine protease (333 aa).

The N-terminal stretch at 1-18 is a signal peptide; sequence MKFLLVAALCALVAIGSC. The propeptide at 19–108 is activation peptide; that stretch reads KPTREEIKTF…MEAAKEPLIN (90 aa). The N-linked (GlcNAc...) asparagine glycan is linked to Asn93. Cystine bridges form between Cys134/Cys182 and Cys168/Cys214. Cys137 is a catalytic residue. Active-site residues include His281 and Asn301.

The protein belongs to the peptidase C1 family. Homodimer.

In terms of biological role, cysteine protease. The chain is Cysteine protease from Blomia tropicalis (Mite).